The chain runs to 417 residues: Transmembrane protease serine 11G (417 aa).

The Cytoplasmic portion of the chain corresponds to 1 to 21 (MYQPGILVRRKRVWKPWTVAL). The chain crosses the membrane as a helical; Signal-anchor for type II membrane protein span at residues 22–42 (ITVALLLALAVLIGLLVYFLV). Topologically, residues 43–417 (YDEKTHYYQA…RDWIKSKTSI (375 aa)) are extracellular. Residues 46–165 (KTHYYQASFW…PYLREMNAAQ (120 aa)) enclose the SEA domain. Asparagine 60 is a glycosylation site (N-linked (GlcNAc...) asparagine). A Peptidase S1 domain is found at 186–416 (IADGKPADKA…YRDWIKSKTS (231 aa)). Cysteine 211 and cysteine 227 form a disulfide bridge. Catalysis depends on charge relay system residues histidine 226 and aspartate 271. 2 disulfide bridges follow: cysteine 336-cysteine 352 and cysteine 363-cysteine 392. The active-site Charge relay system is the serine 367.

This sequence belongs to the peptidase S1 family.

It is found in the membrane. The polypeptide is Transmembrane protease serine 11G (Tmprss11g) (Mus musculus (Mouse)).